The primary structure comprises 435 residues: Chromosomal replication initiator protein DnaA (435 aa).

The domain I, interacts with DnaA modulators stretch occupies residues 1–70 (MNIGEKILLL…KHLFEIQNSI (70 aa)). The domain II stretch occupies residues 70 to 98 (IKVDVSILLKNQVESKKAEQKSVQKQQHS). Positions 99-313 (LLNPSHTFEN…GILSKLHAYS (215 aa)) are domain III, AAA+ region. ATP is bound by residues G143, G145, K146, and T147. Positions 314-435 (QLMHVDIDLQ…ELTNKITSSS (122 aa)) are domain IV, binds dsDNA.

This sequence belongs to the DnaA family. As to quaternary structure, oligomerizes as a right-handed, spiral filament on DNA at oriC.

The protein resides in the cytoplasm. Its function is as follows. Plays an essential role in the initiation and regulation of chromosomal replication. ATP-DnaA binds to the origin of replication (oriC) to initiate formation of the DNA replication initiation complex once per cell cycle. Binds the DnaA box (a 9 base pair repeat at the origin) and separates the double-stranded (ds)DNA. Forms a right-handed helical filament on oriC DNA; dsDNA binds to the exterior of the filament while single-stranded (ss)DNA is stabiized in the filament's interior. The ATP-DnaA-oriC complex binds and stabilizes one strand of the AT-rich DNA unwinding element (DUE), permitting loading of DNA polymerase. After initiation quickly degrades to an ADP-DnaA complex that is not apt for DNA replication. Binds acidic phospholipids. In Sulfurimonas denitrificans (strain ATCC 33889 / DSM 1251) (Thiomicrospira denitrificans (strain ATCC 33889 / DSM 1251)), this protein is Chromosomal replication initiator protein DnaA.